The primary structure comprises 156 residues: ATP synthase subunit b (156 aa).

A helical membrane pass occupies residues 7 to 29 (LIGQSVAFLIFVWFCMKFVWPPL).

The protein belongs to the ATPase B chain family. In terms of assembly, F-type ATPases have 2 components, F(1) - the catalytic core - and F(0) - the membrane proton channel. F(1) has five subunits: alpha(3), beta(3), gamma(1), delta(1), epsilon(1). F(0) has three main subunits: a(1), b(2) and c(10-14). The alpha and beta chains form an alternating ring which encloses part of the gamma chain. F(1) is attached to F(0) by a central stalk formed by the gamma and epsilon chains, while a peripheral stalk is formed by the delta and b chains.

Its subcellular location is the cell inner membrane. Its function is as follows. F(1)F(0) ATP synthase produces ATP from ADP in the presence of a proton or sodium gradient. F-type ATPases consist of two structural domains, F(1) containing the extramembraneous catalytic core and F(0) containing the membrane proton channel, linked together by a central stalk and a peripheral stalk. During catalysis, ATP synthesis in the catalytic domain of F(1) is coupled via a rotary mechanism of the central stalk subunits to proton translocation. Functionally, component of the F(0) channel, it forms part of the peripheral stalk, linking F(1) to F(0). The protein is ATP synthase subunit b of Shewanella denitrificans (strain OS217 / ATCC BAA-1090 / DSM 15013).